A 38-amino-acid chain; its full sequence is Photosystem II reaction center protein L (38 aa).

Residues 17–37 traverse the membrane as a helical segment; the sequence is SLYWGLLLMFVLAVLFSSYFF.

It belongs to the PsbL family. As to quaternary structure, PSII is composed of 1 copy each of membrane proteins PsbA, PsbB, PsbC, PsbD, PsbE, PsbF, PsbH, PsbI, PsbJ, PsbK, PsbL, PsbM, PsbT, PsbX, PsbY, PsbZ, Psb30/Ycf12, at least 3 peripheral proteins of the oxygen-evolving complex and a large number of cofactors. It forms dimeric complexes.

It localises to the plastid. The protein localises to the chloroplast thylakoid membrane. In terms of biological role, one of the components of the core complex of photosystem II (PSII). PSII is a light-driven water:plastoquinone oxidoreductase that uses light energy to abstract electrons from H(2)O, generating O(2) and a proton gradient subsequently used for ATP formation. It consists of a core antenna complex that captures photons, and an electron transfer chain that converts photonic excitation into a charge separation. This subunit is found at the monomer-monomer interface and is required for correct PSII assembly and/or dimerization. The polypeptide is Photosystem II reaction center protein L (Emiliania huxleyi (Coccolithophore)).